The chain runs to 144 residues: Transcriptional regulator SlyA (144 aa).

One can recognise an HTH marR-type domain in the interval 2–135 (ESPLGSDLAR…LSNMIAKLEK (134 aa)). The segment at residues 49–72 (QIQLAKAIGIEQPSLVRTLDQLEE) is a DNA-binding region (H-T-H motif).

This sequence belongs to the SlyA family. In terms of assembly, homodimer.

Functionally, transcription regulator that can specifically activate or repress expression of target genes. This is Transcriptional regulator SlyA from Sodalis glossinidius (strain morsitans).